The chain runs to 205 residues: Cerebellin-3 (205 aa).

The first 32 residues, methionine 1 to alanine 32, serve as a signal peptide directing secretion. A C1q domain is found at alanine 67–leucine 205. Residue asparagine 90 is glycosylated (N-linked (GlcNAc...) asparagine).

Heterohexamer; disulfide-linked heterotrimers. Interacts with CBLN1. May also form oligomers with CBLN2 and CBLN4.

It is found in the endoplasmic reticulum. The protein localises to the golgi apparatus. It localises to the cis-Golgi network. The protein resides in the secreted. Its subcellular location is the synapse. In terms of biological role, may be involved in synaptic functions in the CNS. In Bos taurus (Bovine), this protein is Cerebellin-3 (CBLN3).